A 283-amino-acid chain; its full sequence is V-set domain containing T-cell activation inhibitor 1 (283 aa).

The N-terminal stretch at 1-24 (MASLGQIIFWSIINIIIILAGAIA) is a signal peptide. 2 consecutive Ig-like V-type domains span residues 35–144 (HFIT…ANLE) and 153–241 (PEIN…IKVT). Cystine bridges form between Cys-56–Cys-130 and Cys-168–Cys-225. Asn-216 carries N-linked (GlcNAc...) asparagine glycosylation. Gly-257 carries GPI-anchor amidated glycine lipidation. The propeptide at 258 to 283 (PSPCVFSSAFVAGWALLSLSCCLMLR) is removed in mature form.

Belongs to the immunoglobulin superfamily. BTN/MOG family. N-glycosylated. In terms of tissue distribution, expressed on the surface of professional antigen-presenting cells (at protein level). Widely expressed, including in kidney, liver, lung, pancreas, placenta, prostate, spleen, testis and thymus.

The protein resides in the cell membrane. Negatively regulates T-cell-mediated immune response by inhibiting T-cell activation, proliferation, cytokine production and development of cytotoxicity. When expressed on the cell surface of tumor macrophages, plays an important role, together with regulatory T-cells (Treg), in the suppression of tumor-associated antigen-specific T-cell immunity. Involved in promoting epithelial cell transformation. The polypeptide is V-set domain containing T-cell activation inhibitor 1 (Mus musculus (Mouse)).